The chain runs to 147 residues: Nucleoside diphosphate kinase (147 aa).

Residues lysine 11, phenylalanine 59, arginine 87, threonine 93, arginine 104, and asparagine 114 each contribute to the ATP site. Histidine 117 (pros-phosphohistidine intermediate) is an active-site residue.

It belongs to the NDK family. Homotetramer. Requires Mg(2+) as cofactor.

It localises to the cytoplasm. It carries out the reaction a 2'-deoxyribonucleoside 5'-diphosphate + ATP = a 2'-deoxyribonucleoside 5'-triphosphate + ADP. It catalyses the reaction a ribonucleoside 5'-diphosphate + ATP = a ribonucleoside 5'-triphosphate + ADP. In terms of biological role, major role in the synthesis of nucleoside triphosphates other than ATP. The ATP gamma phosphate is transferred to the NDP beta phosphate via a ping-pong mechanism, using a phosphorylated active-site intermediate. This is Nucleoside diphosphate kinase from Anaeromyxobacter dehalogenans (strain 2CP-C).